We begin with the raw amino-acid sequence, 348 residues long: Dihydroorotase (348 aa).

Residues His-17 and His-19 each contribute to the Zn(2+) site. Residues 19 to 21 (HLR) and Asn-45 contribute to the substrate site. 3 residues coordinate Zn(2+): Lys-103, His-140, and His-178. Lys-103 carries the post-translational modification N6-carboxylysine. His-140 serves as a coordination point for substrate. Residue Leu-223 participates in substrate binding. Asp-251 is a binding site for Zn(2+). Asp-251 is an active-site residue. Substrate contacts are provided by His-255 and Ala-267.

Belongs to the metallo-dependent hydrolases superfamily. DHOase family. Class II DHOase subfamily. As to quaternary structure, homodimer. Zn(2+) serves as cofactor. It depends on Co(2+) as a cofactor. Requires Mg(2+) as cofactor. Ni(2+) is required as a cofactor.

It catalyses the reaction (S)-dihydroorotate + H2O = N-carbamoyl-L-aspartate + H(+). It functions in the pathway pyrimidine metabolism; UMP biosynthesis via de novo pathway; (S)-dihydroorotate from bicarbonate: step 3/3. In terms of biological role, catalyzes the reversible cyclization of carbamoyl aspartate to dihydroorotate. This is Dihydroorotase from Klebsiella pneumoniae subsp. pneumoniae (strain ATCC 700721 / MGH 78578).